We begin with the raw amino-acid sequence, 244 residues long: Large ribosomal subunit protein uL2 (244 aa).

Composition is skewed to basic residues over residues 1-12 (MGKRPLVRRRGR) and 234-244 (KTGRARIKERK). Disordered stretches follow at residues 1–30 (MGKRPLVRRRGRGGNQFRSTSTGKVGTKAN) and 203–244 (HGGG…KERK).

Belongs to the universal ribosomal protein uL2 family. In terms of assembly, part of the 50S ribosomal subunit. Forms a bridge to the 30S subunit in the 70S ribosome.

One of the primary rRNA binding proteins. Required for association of the 30S and 50S subunits to form the 70S ribosome, for tRNA binding and peptide bond formation. It has been suggested to have peptidyltransferase activity; this is somewhat controversial. Makes several contacts with the 16S rRNA in the 70S ribosome. The protein is Large ribosomal subunit protein uL2 of Nitrosopumilus maritimus (strain SCM1).